The sequence spans 193 residues: Deoxycytidylate deaminase (193 aa).

In terms of domain architecture, CMP/dCMP-type deaminase spans 1–171 (MKASTVLQIA…DILRNAGIEV (171 aa)). Zn(2+)-binding residues include Cys-19, Cys-49, His-94, Glu-102, and His-104. The active-site Proton donor is the Glu-106. Positions 132 and 135 each coordinate Zn(2+). Substrate is bound at residue Tyr-153.

It belongs to the cytidine and deoxycytidylate deaminase family. As to quaternary structure, homohexamer. Zn(2+) serves as cofactor.

The enzyme catalyses dCMP + H2O + H(+) = dUMP + NH4(+). With respect to regulation, allosteric enzyme whose activity is greatly influenced by the end products of its metabolic pathway, dCTP and dTTP. In terms of biological role, supplies the nucleotide substrate for thymidylate synthetase. This is Deoxycytidylate deaminase (CD) from Escherichia coli (Bacteriophage T4).